A 444-amino-acid polypeptide reads, in one-letter code: Shufflon protein B' (444 aa).

The segment at 1-361 is constant region; the sequence is MKKYDRGWAS…TGAILSCQSG (361 aa). The interval 362-444 is variable region; that stretch reads TWRKVGSGEL…GSITVYAICQ (83 aa).

This chain is Shufflon protein B', found in Escherichia coli.